The primary structure comprises 560 residues: Poly(3-hydroxyalkanoate) polymerase 2 (560 aa).

Cysteine 296 is a catalytic residue.

Belongs to the PHA/PHB synthase family. Type II PhaC subfamily.

It participates in biopolymer metabolism; poly-(R)-3-hydroxybutanoate biosynthesis. In terms of biological role, synthesizes poly(3-hydroxyalkanoates) (PHA), complements a mutant of P.putida that does not make PHA. This chain is Poly(3-hydroxyalkanoate) polymerase 2, found in Ectopseudomonas oleovorans (Pseudomonas oleovorans).